Consider the following 425-residue polypeptide: Glutamyl-tRNA(Gln) amidotransferase subunit A (425 aa).

Residues Lys29 and Ser104 each act as charge relay system in the active site. Ser128 acts as the Acyl-ester intermediate in catalysis.

The protein belongs to the amidase family. GatA subfamily. Heterotrimer of A, B and C subunits.

It carries out the reaction L-glutamyl-tRNA(Gln) + L-glutamine + ATP + H2O = L-glutaminyl-tRNA(Gln) + L-glutamate + ADP + phosphate + H(+). Functionally, allows the formation of correctly charged Gln-tRNA(Gln) through the transamidation of misacylated Glu-tRNA(Gln) in organisms which lack glutaminyl-tRNA synthetase. The reaction takes place in the presence of glutamine and ATP through an activated gamma-phospho-Glu-tRNA(Gln). The chain is Glutamyl-tRNA(Gln) amidotransferase subunit A from Haloarcula marismortui (strain ATCC 43049 / DSM 3752 / JCM 8966 / VKM B-1809) (Halobacterium marismortui).